We begin with the raw amino-acid sequence, 421 residues long: Cyclin-A2 (421 aa).

The residue at position 1 (Met1) is an N-acetylmethionine. The disordered stretch occupies residues 1–60 (MPGSSRQSGREAGSALLSLQQEDQENVNPEKAAPDQRARAALKTGNARGNAPQQRLKARR). Residue Ser5 is modified to Phosphoserine.

The protein belongs to the cyclin family. Cyclin AB subfamily. Interacts with the CDK1 and CDK2 protein kinases to form serine/threonine kinase holoenzyme complexes. Interacts with CDK1 (hyperphosphorylated form in G1 and underphosphorylated forms in S and G2). Interacts with CDK2; the interaction increases from G1 to G2. Interacts (associated with CDK2 but not with CDK1) with SCAPER; regulates the activity of CCNA2/CDK2 by transiently maintaining CCNA2 in the cytoplasm. Forms a ternary complex with CDK2 and CDKN1B; CDKN1B inhibits the kinase activity of CDK2 through conformational rearrangements. Interacts with INCA1. Post-translationally, polyubiquitinated via 'Lys-11'-linked ubiquitin by the anaphase-promoting complex (APC/C), leading to its degradation by the proteasome. Deubiquitinated and stabilized by USP37 enables entry into S phase. Ubiquitinated during the G1 phase by the SCF(FBXO31) complex, leading to its proteasomal degradation.

It is found in the nucleus. Its subcellular location is the cytoplasm. In terms of biological role, cyclin which controls both the G1/S and the G2/M transition phases of the cell cycle. Functions through the formation of specific serine/threonine kinase holoenzyme complexes with the cyclin-dependent protein kinases CDK1 and CDK2. The cyclin subunit confers the substrate specificity of these complexes and differentially interacts with and activates CDK1 and CDK2 throughout the cell cycle. The chain is Cyclin-A2 from Mesocricetus auratus (Golden hamster).